A 272-amino-acid chain; its full sequence is Tryptophan synthase alpha chain (272 aa).

Residues glutamate 49 and aspartate 60 each act as proton acceptor in the active site.

The protein belongs to the TrpA family. Tetramer of two alpha and two beta chains.

The catalysed reaction is (1S,2R)-1-C-(indol-3-yl)glycerol 3-phosphate + L-serine = D-glyceraldehyde 3-phosphate + L-tryptophan + H2O. Its pathway is amino-acid biosynthesis; L-tryptophan biosynthesis; L-tryptophan from chorismate: step 5/5. Functionally, the alpha subunit is responsible for the aldol cleavage of indoleglycerol phosphate to indole and glyceraldehyde 3-phosphate. This is Tryptophan synthase alpha chain from Polaromonas naphthalenivorans (strain CJ2).